The following is a 447-amino-acid chain: MKSPKVGFVSLGCPKALVDSERILTQLRTEGYQVASDYDGADLVVVNTCGFIESAVQESLDAIGEAMSENGRVIVTGCLGKDEDKIRQMHPNVLKVTGAAAYQDVMEAVHEYVPAPPRHNPFVDLVPEQGIRLTPKHYAYLKISEGCNHRCTFCIIPSMRGDLVSRPVGSVLEEAAALKRAGVKEVLVISQDTSAYGVDTKYKLDFWNGQPVKTKFYDMCEALGQLGIWVRLHYVYPYPHVDAVIDLMAQGKILPYLDIPFQHASPRILKLMKRPAHSENTLDRIKVWREKCPNLVIRSTFVVGFPGETEEDFQILLEWLKEAQLDRVGCFTYSPVEGATANDLPDHVSEEVKQERYERFMQVQQEISAARLQKRIGQTMTVLVDSLEDEYPVAVARSYADAPEIDGNVFVEDIDKSLVQPGQLLEVEITDADEYDLFAKLIQIKTA.

The MTTase N-terminal domain maps to 4–114 (PKVGFVSLGC…VMEAVHEYVP (111 aa)). [4Fe-4S] cluster-binding residues include Cys13, Cys49, Cys78, Cys147, Cys151, and Cys154. Residues 133–370 (LTPKHYAYLK…MQVQQEISAA (238 aa)) form the Radical SAM core domain. The 71-residue stretch at 373 to 443 (QKRIGQTMTV…EYDLFAKLIQ (71 aa)) folds into the TRAM domain.

The protein belongs to the methylthiotransferase family. RimO subfamily. [4Fe-4S] cluster is required as a cofactor.

Its subcellular location is the cytoplasm. The catalysed reaction is L-aspartate(89)-[ribosomal protein uS12]-hydrogen + (sulfur carrier)-SH + AH2 + 2 S-adenosyl-L-methionine = 3-methylsulfanyl-L-aspartate(89)-[ribosomal protein uS12]-hydrogen + (sulfur carrier)-H + 5'-deoxyadenosine + L-methionine + A + S-adenosyl-L-homocysteine + 2 H(+). Catalyzes the methylthiolation of an aspartic acid residue of ribosomal protein uS12. The chain is Ribosomal protein uS12 methylthiotransferase RimO from Acinetobacter baylyi (strain ATCC 33305 / BD413 / ADP1).